We begin with the raw amino-acid sequence, 294 residues long: MKLAVYGKGGIGKSTTSCNISIALARRGKKVLQIGCDPKHDSTFTLTGFLIPTIIDTLQSKDYHYEDVWPEDVIYQGYGGVDCVEAGGPPAGAGCGGYVVGETVKLLKELNAFYEYDVILFDVLGDVVCGGFAAPLNYADYCIIVTDNGFDALFAANRIVASVREKARTHPLRVAGLVGNRTDARDLIDKYVEVCPMPVLEVLPLIEDIRISRVKGQTLFEIAETQTAVSYVCDYFLNIADQLLSQPEGVVPNELGDRELFSLLSDFYLNPTSNSEKNANISGLEPDSLDFLIV.

ATP contacts are provided by residues 10 to 15 and K39; that span reads GIGKST. S14 is a Mg(2+) binding site. Positions 95 and 129 each coordinate [4Fe-4S] cluster. ATP is bound at residue 180 to 181; that stretch reads NR.

Belongs to the NifH/BchL/ChlL family. Homodimer. Protochlorophyllide reductase is composed of three subunits; ChlL, ChlN and ChlB. The cofactor is [4Fe-4S] cluster.

Its subcellular location is the plastid. It localises to the chloroplast. The catalysed reaction is chlorophyllide a + oxidized 2[4Fe-4S]-[ferredoxin] + 2 ADP + 2 phosphate = protochlorophyllide a + reduced 2[4Fe-4S]-[ferredoxin] + 2 ATP + 2 H2O. Its pathway is porphyrin-containing compound metabolism; chlorophyll biosynthesis (light-independent). In terms of biological role, component of the dark-operative protochlorophyllide reductase (DPOR) that uses Mg-ATP and reduced ferredoxin to reduce ring D of protochlorophyllide (Pchlide) to form chlorophyllide a (Chlide). This reaction is light-independent. The L component serves as a unique electron donor to the NB-component of the complex, and binds Mg-ATP. This is Light-independent protochlorophyllide reductase iron-sulfur ATP-binding protein from Pleurastrum terricola (Filamentous green alga).